Here is a 451-residue protein sequence, read N- to C-terminus: Tryptophan--tRNA ligase (451 aa).

Residues 10 to 12 and 18 to 19 each bind ATP; these read TTT and GN. Positions 11-19 match the 'HIGH' region motif; the sequence is TTGTPHLGN. Asp-143 provides a ligand contact to L-tryptophan. ATP-binding positions include 155-157, Leu-195, and 202-206; these read GRD and KMSKS. The short motif at 202-206 is the 'KMSKS' region element; sequence KMSKS.

This sequence belongs to the class-I aminoacyl-tRNA synthetase family. In terms of assembly, homodimer.

It localises to the cytoplasm. It carries out the reaction tRNA(Trp) + L-tryptophan + ATP = L-tryptophyl-tRNA(Trp) + AMP + diphosphate + H(+). Catalyzes the attachment of tryptophan to tRNA(Trp). In Bordetella pertussis (strain Tohama I / ATCC BAA-589 / NCTC 13251), this protein is Tryptophan--tRNA ligase.